The following is a 207-amino-acid chain: Large ribosomal subunit protein uL4 (207 aa).

The disordered stretch occupies residues 47 to 77 (GTADTKTRAEVSGGGRKPWRQKGTGRARHGS). The span at 63–77 (KPWRQKGTGRARHGS) shows a compositional bias: basic residues.

It belongs to the universal ribosomal protein uL4 family. Part of the 50S ribosomal subunit.

In terms of biological role, one of the primary rRNA binding proteins, this protein initially binds near the 5'-end of the 23S rRNA. It is important during the early stages of 50S assembly. It makes multiple contacts with different domains of the 23S rRNA in the assembled 50S subunit and ribosome. Its function is as follows. Forms part of the polypeptide exit tunnel. This is Large ribosomal subunit protein uL4 from Symbiobacterium thermophilum (strain DSM 24528 / JCM 14929 / IAM 14863 / T).